Consider the following 195-residue polypeptide: 7-methyl-GTP pyrophosphatase (195 aa).

Residue aspartate 70 is the Proton acceptor of the active site.

Belongs to the Maf family. YceF subfamily. The cofactor is a divalent metal cation.

Its subcellular location is the cytoplasm. It catalyses the reaction N(7)-methyl-GTP + H2O = N(7)-methyl-GMP + diphosphate + H(+). In terms of biological role, nucleoside triphosphate pyrophosphatase that hydrolyzes 7-methyl-GTP (m(7)GTP). May have a dual role in cell division arrest and in preventing the incorporation of modified nucleotides into cellular nucleic acids. This is 7-methyl-GTP pyrophosphatase from Shewanella sp. (strain MR-4).